We begin with the raw amino-acid sequence, 228 residues long: MNLSLFAIALGGAAGALARFWVSNGLYGWLGRDFPHGTLFINVSGSFLMGFLSVMMIQRFALAAEYRAAVLVGFLGAYTTFSTFSLETLALFEEGSLLKAALNVLLSVVLCLAAVWVGAVLARRLAVGEIAALVGGPGLRIFGAACGMSLLAGFAAALAFARAGLGPQLESLVLVALTGLVVVGTLVALVVTGTELRGAFQLWGAFTLSAFAAVVFLSLGLVLARGAG.

7 consecutive transmembrane segments (helical) span residues 3–23 (LSLF…FWVS), 37–57 (GTLF…VMMI), 72–92 (VGFL…LALF), 101–121 (ALNV…GAVL), 141–161 (IFGA…LAFA), 172–192 (LVLV…LVVT), and 202–222 (LWGA…LGLV). Residues glycine 76 and threonine 79 each contribute to the Na(+) site.

This sequence belongs to the fluoride channel Fluc/FEX (TC 1.A.43) family.

The protein localises to the cell inner membrane. The catalysed reaction is fluoride(in) = fluoride(out). With respect to regulation, na(+) is not transported, but it plays an essential structural role and its presence is essential for fluoride channel function. Its function is as follows. Fluoride-specific ion channel. Important for reducing fluoride concentration in the cell, thus reducing its toxicity. The polypeptide is Fluoride-specific ion channel FluC (Methylococcus capsulatus (strain ATCC 33009 / NCIMB 11132 / Bath)).